Reading from the N-terminus, the 1229-residue chain is uncharacterized protein (1229 aa).

An N-terminal signal peptide occupies residues 1-19; it reads MKYFLLLFLLVLSFTLVES. N-linked (GlcNAc...) asparagine glycosylation is found at asparagine 238, asparagine 270, asparagine 370, asparagine 538, asparagine 691, and asparagine 701. One can recognise a Galectin 1 domain in the interval 678 to 813; sequence RMVNFANVME…QWNIDTVKMN (136 aa). The segment covering 818-829 has biased composition (polar residues); sequence HTTTVEPSTPLE. The segment at 818–903 is disordered; it reads HTTTVEPSTP…TLPPTTTPYN (86 aa). Positions 830–846 are enriched in low complexity; it reads TASTSQSTPSATLTSTT. Positions 847-869 are enriched in polar residues; the sequence is ENIPSTSKIPETSTTQRPTSPIL. Residues 870 to 901 show a composition bias toward low complexity; sequence TSGATSTSSSTESTTTSPTTSTTTTLPPTTTP. 3 N-linked (GlcNAc...) asparagine glycosylation sites follow: asparagine 903, asparagine 938, and asparagine 948. The Galectin 2 domain maps to 925 to 1059; that stretch reads RPVVFSRYME…ESTIDTVSMA (135 aa). Residues 1061 to 1087 are disordered; that stretch reads VRPPTTPTTTTSTTTTTTPKLTTTSTL. The segment covering 1067–1087 has biased composition (low complexity); that stretch reads PTTTTSTTTTTTPKLTTTSTL. A glycan (N-linked (GlcNAc...) asparagine) is linked at asparagine 1146.

This is an uncharacterized protein from Caenorhabditis elegans.